We begin with the raw amino-acid sequence, 211 residues long: Glycerol-3-phosphate acyltransferase (211 aa).

4 helical membrane-spanning segments follow: residues 5 to 25, 80 to 100, 112 to 132, and 138 to 158; these read ALGM…ILFC, PLYL…PVFF, FGAI…TWLL, and GYSS…VWWF.

Belongs to the PlsY family. Probably interacts with PlsX.

It is found in the cell inner membrane. The catalysed reaction is an acyl phosphate + sn-glycerol 3-phosphate = a 1-acyl-sn-glycero-3-phosphate + phosphate. It participates in lipid metabolism; phospholipid metabolism. Its function is as follows. Catalyzes the transfer of an acyl group from acyl-phosphate (acyl-PO(4)) to glycerol-3-phosphate (G3P) to form lysophosphatidic acid (LPA). This enzyme utilizes acyl-phosphate as fatty acyl donor, but not acyl-CoA or acyl-ACP. This chain is Glycerol-3-phosphate acyltransferase, found in Pectobacterium carotovorum subsp. carotovorum (strain PC1).